A 323-amino-acid chain; its full sequence is DNA repair and recombination protein RadA (323 aa).

ATP is bound at residue 115 to 122 (GEFGSGKT).

This sequence belongs to the eukaryotic RecA-like protein family.

Functionally, involved in DNA repair and in homologous recombination. Binds and assemble on single-stranded DNA to form a nucleoprotein filament. Hydrolyzes ATP in a ssDNA-dependent manner and promotes DNA strand exchange between homologous DNA molecules. The polypeptide is DNA repair and recombination protein RadA (Thermoplasma volcanium (strain ATCC 51530 / DSM 4299 / JCM 9571 / NBRC 15438 / GSS1)).